Here is an 89-residue protein sequence, read N- to C-terminus: Putative septation protein SpoVG (89 aa).

This sequence belongs to the SpoVG family.

Could be involved in septation. The protein is Putative septation protein SpoVG of Heliobacterium modesticaldum (strain ATCC 51547 / Ice1).